A 179-amino-acid chain; its full sequence is Large ribosomal subunit protein uL6 (179 aa).

It belongs to the universal ribosomal protein uL6 family. Part of the 50S ribosomal subunit.

Its function is as follows. This protein binds to the 23S rRNA, and is important in its secondary structure. It is located near the subunit interface in the base of the L7/L12 stalk, and near the tRNA binding site of the peptidyltransferase center. In Persephonella marina (strain DSM 14350 / EX-H1), this protein is Large ribosomal subunit protein uL6.